The sequence spans 141 residues: Small ribosomal subunit protein uS12 (141 aa).

It belongs to the universal ribosomal protein uS12 family. As to quaternary structure, part of the 30S ribosomal subunit.

Its function is as follows. With S4 and S5 plays an important role in translational accuracy. Located at the interface of the 30S and 50S subunits. This is Small ribosomal subunit protein uS12 from Methanobrevibacter smithii (strain ATCC 35061 / DSM 861 / OCM 144 / PS).